The sequence spans 536 residues: Probable serine/threonine-protein kinase DDB_G0268550 (536 aa).

The Protein kinase domain maps to 14–305 (EIIEKNYRKG…IDVLEIHPFL (292 aa)). ATP is bound by residues 20 to 28 (YRKGGFSKI) and K51. D147 (proton acceptor) is an active-site residue. The disordered stretch occupies residues 161–192 (DNNNNNNNNNNNNNNNNNNNSNINDDNNNSNS).

It belongs to the protein kinase superfamily. Ser/Thr protein kinase family. It depends on Mg(2+) as a cofactor.

The catalysed reaction is L-seryl-[protein] + ATP = O-phospho-L-seryl-[protein] + ADP + H(+). The enzyme catalyses L-threonyl-[protein] + ATP = O-phospho-L-threonyl-[protein] + ADP + H(+). The protein is Probable serine/threonine-protein kinase DDB_G0268550 of Dictyostelium discoideum (Social amoeba).